The primary structure comprises 339 residues: uncharacterized protein (339 aa).

The interval 1-24 is disordered; it reads IQPARRHTKNTNMAKHTTKGTGHS. Residues 10–21 are compositionally biased toward polar residues; it reads NTNMAKHTTKGT.

Its subcellular location is the mitochondrion. This is an uncharacterized protein from Zea mays (Maize).